The primary structure comprises 578 residues: MPSLIPKEFINELIFKTNIIDIINTRLPLKKVGKNYNTHCPFHQEKTPSFTVNFEKQFYFCFGCNTHGNIIDFLMNYEQLTFVESIKELAKIHGLTIPCKNINKEKLFNYEKITNLYLLTKNIADLYHRNIFKTEYAYQYILNRGIDKSMIKYFNLGFSPKNWYDLEKKNKKQCYNQKELQEIGILKTTILGYTYDRFKNRIIFPIRNKNGNIVGFGGRTLNNHIPKYINSPETQIFHKGFQLYGLYEMLKTNPKPKQILIVEGYVDVIALVQFKINYTISTLGTIISNEQIKLLFRTSNTIIFCYDGDVSGQKAAWRTLNISLSHIHDGKNVKFIFLPNNEDPDSIIRKEGHDNFKIRIKKSIDFSKFLLQTLFKKTDLNSISEKSHTSTIAISLIRKIPGKITQTYLFQTLSKKIGILDYHVLINNNINNINTKIYTKKPIKKTTIRIVIALLIQNPWLALTLPSLKHLQNYKIIGLSCFLDLVEKCISMPNSNTGQILEKYRNKNIFKHLANLAKWDHMIHNEKIKDFFLDSLTKICDIILEDRQNKLISQERLNGLNKQEKYELWSINKELAKK.

The segment at 40–64 (CPFHQEKTPSFTVNFEKQFYFCFGC) adopts a CHC2-type zinc-finger fold. Residues 257–339 (KQILIVEGYV…GKNVKFIFLP (83 aa)) form the Toprim domain. Mg(2+) contacts are provided by Glu263, Asp307, and Asp309.

The protein belongs to the DnaG primase family. Monomer. Interacts with DnaB. Zn(2+) serves as cofactor. Requires Mg(2+) as cofactor.

The catalysed reaction is ssDNA + n NTP = ssDNA/pppN(pN)n-1 hybrid + (n-1) diphosphate.. RNA polymerase that catalyzes the synthesis of short RNA molecules used as primers for DNA polymerase during DNA replication. This is DNA primase from Buchnera aphidicola subsp. Baizongia pistaciae (strain Bp).